The primary structure comprises 370 residues: Phospho-N-acetylmuramoyl-pentapeptide-transferase (370 aa).

10 consecutive transmembrane segments (helical) span residues 29-49 (AGLT…SFLL), 70-90 (GTPT…TLLW), 93-113 (LSNW…GLGF), 133-153 (KFIV…YYTG), 177-197 (GPVW…LIGS), 209-229 (GLAS…AYVS), 251-271 (VFLA…CHPA), 273-293 (VFMG…VAIM), 298-318 (ILLV…ILQV), and 349-369 (VIRF…TLKI).

It belongs to the glycosyltransferase 4 family. MraY subfamily. Requires Mg(2+) as cofactor.

The protein resides in the cell inner membrane. The catalysed reaction is UDP-N-acetyl-alpha-D-muramoyl-L-alanyl-gamma-D-glutamyl-meso-2,6-diaminopimeloyl-D-alanyl-D-alanine + di-trans,octa-cis-undecaprenyl phosphate = di-trans,octa-cis-undecaprenyl diphospho-N-acetyl-alpha-D-muramoyl-L-alanyl-D-glutamyl-meso-2,6-diaminopimeloyl-D-alanyl-D-alanine + UMP. Its pathway is cell wall biogenesis; peptidoglycan biosynthesis. In terms of biological role, catalyzes the initial step of the lipid cycle reactions in the biosynthesis of the cell wall peptidoglycan: transfers peptidoglycan precursor phospho-MurNAc-pentapeptide from UDP-MurNAc-pentapeptide onto the lipid carrier undecaprenyl phosphate, yielding undecaprenyl-pyrophosphoryl-MurNAc-pentapeptide, known as lipid I. The chain is Phospho-N-acetylmuramoyl-pentapeptide-transferase from Leptospira biflexa serovar Patoc (strain Patoc 1 / Ames).